A 471-amino-acid chain; its full sequence is Steroid C26-monooxygenase (471 aa).

Glycine 238 lines the substrate pocket. Residue cysteine 412 participates in heme binding.

This sequence belongs to the cytochrome P450 family. Heme is required as a cofactor.

The catalysed reaction is cholest-4-en-3-one + 6 reduced [2Fe-2S]-[ferredoxin] + 3 O2 + 5 H(+) = (25S)-3-oxocholest-4-en-26-oate + 6 oxidized [2Fe-2S]-[ferredoxin] + 4 H2O. Functionally, involved in the utilization of cholesterol as the sole carbon and energy source by degrading the side chain. Primarily catalyzes the sequential oxidation of the terminal methyl of cholest-4-en-3-one into (25S)-26-hydroxycholest-4-en-3-one (alcohol), (25S)-26-oxocholest-4-en-3-one (aldehyde), to finally yield the carboxylic acid (25S)-3-oxocholest-4-en-26-oate. Also able to sequentially oxidize cholesterol itself, not only cholest-4-en-3-one. The chain is Steroid C26-monooxygenase (cyp125) from Rhodococcus jostii (strain RHA1).